A 197-amino-acid chain; its full sequence is Holliday junction branch migration complex subunit RuvA (197 aa).

The domain I stretch occupies residues 1-64 (MYEYIKGKYI…EDFIGVYGFL (64 aa)). Residues 65–143 (TKDELSMFKL…IDILEEDDEQ (79 aa)) form a domain II region. Residues 144-148 (TINKV) form a flexible linker region. Residues 149 to 197 (TDDKKVLEAVAALITLGYSEKEANKVINSCDKNNSLEQIIKEALKYLMK) form a domain III region.

It belongs to the RuvA family. As to quaternary structure, homotetramer. Forms an RuvA(8)-RuvB(12)-Holliday junction (HJ) complex. HJ DNA is sandwiched between 2 RuvA tetramers; dsDNA enters through RuvA and exits via RuvB. An RuvB hexamer assembles on each DNA strand where it exits the tetramer. Each RuvB hexamer is contacted by two RuvA subunits (via domain III) on 2 adjacent RuvB subunits; this complex drives branch migration. In the full resolvosome a probable DNA-RuvA(4)-RuvB(12)-RuvC(2) complex forms which resolves the HJ.

The protein localises to the cytoplasm. In terms of biological role, the RuvA-RuvB-RuvC complex processes Holliday junction (HJ) DNA during genetic recombination and DNA repair, while the RuvA-RuvB complex plays an important role in the rescue of blocked DNA replication forks via replication fork reversal (RFR). RuvA specifically binds to HJ cruciform DNA, conferring on it an open structure. The RuvB hexamer acts as an ATP-dependent pump, pulling dsDNA into and through the RuvAB complex. HJ branch migration allows RuvC to scan DNA until it finds its consensus sequence, where it cleaves and resolves the cruciform DNA. This chain is Holliday junction branch migration complex subunit RuvA, found in Clostridium botulinum (strain 657 / Type Ba4).